We begin with the raw amino-acid sequence, 181 residues long: Protein AC41 (181 aa).

In terms of biological role, plays a role in late gene expression. The polypeptide is Protein AC41 (AC41) (Autographa californica nuclear polyhedrosis virus (AcMNPV)).